Reading from the N-terminus, the 193-residue chain is MTVLSDRDIKRALEEGDIVVKPLEEEYLEEALGPASLDLRLGNEFVVFKTLHKPCIDPTVDAGENTERIVIDEDEEFVINPGELVLAVTHEWIEINAPDITGVLHGRSSLGRLGIQAHVEAGYVDPGWRGRLTLELVNFNPMPVKLRPGMRVVQIVFHRLSSPAERTYAESSGKYHGDERPSPSKMHLDFCRG.

DCTP contacts are provided by residues 107-112, Asp125, 133-135, Gln154, and Tyr168; these read RSSLGR and TLE. The Proton donor/acceptor role is filled by Glu135. The tract at residues 169–193 is disordered; sequence AESSGKYHGDERPSPSKMHLDFCRG. Positions 173–193 are enriched in basic and acidic residues; that stretch reads GKYHGDERPSPSKMHLDFCRG.

It belongs to the dCTP deaminase family. In terms of assembly, homotrimer.

The catalysed reaction is dCTP + 2 H2O = dUMP + NH4(+) + diphosphate. The protein operates within pyrimidine metabolism; dUMP biosynthesis; dUMP from dCTP: step 1/1. Bifunctional enzyme that catalyzes both the deamination of dCTP to dUTP and the hydrolysis of dUTP to dUMP without releasing the toxic dUTP intermediate. The chain is dCTP deaminase, dUMP-forming from Methanopyrus kandleri (strain AV19 / DSM 6324 / JCM 9639 / NBRC 100938).